A 152-amino-acid polypeptide reads, in one-letter code: Superoxide dismutase [Cu-Zn] (152 aa).

3 residues coordinate Cu cation: H45, H47, and H62. A disulfide bridge connects residues C56 and C145. Residues H62, H70, H79, and D82 each contribute to the Zn(2+) site. H119 is a Cu cation binding site.

It belongs to the Cu-Zn superoxide dismutase family. In terms of assembly, homodimer. The cofactor is Cu cation. It depends on Zn(2+) as a cofactor.

It localises to the cytoplasm. It carries out the reaction 2 superoxide + 2 H(+) = H2O2 + O2. In terms of biological role, destroys radicals which are normally produced within the cells and which are toxic to biological systems. The protein is Superoxide dismutase [Cu-Zn] (SODCC) of Panax ginseng (Korean ginseng).